A 512-amino-acid polypeptide reads, in one-letter code: ATP synthase subunit alpha (512 aa).

Gly-169–Thr-176 serves as a coordination point for ATP.

It belongs to the ATPase alpha/beta chains family. As to quaternary structure, F-type ATPases have 2 components, CF(1) - the catalytic core - and CF(0) - the membrane proton channel. CF(1) has five subunits: alpha(3), beta(3), gamma(1), delta(1), epsilon(1). CF(0) has three main subunits: a(1), b(2) and c(9-12). The alpha and beta chains form an alternating ring which encloses part of the gamma chain. CF(1) is attached to CF(0) by a central stalk formed by the gamma and epsilon chains, while a peripheral stalk is formed by the delta and b chains.

Its subcellular location is the cell inner membrane. The catalysed reaction is ATP + H2O + 4 H(+)(in) = ADP + phosphate + 5 H(+)(out). Its function is as follows. Produces ATP from ADP in the presence of a proton gradient across the membrane. The alpha chain is a regulatory subunit. In Rickettsia bellii (strain OSU 85-389), this protein is ATP synthase subunit alpha.